We begin with the raw amino-acid sequence, 260 residues long: NAD-capped RNA hydrolase NudC (260 aa).

Residues K25 and R69 each contribute to the substrate site. Zn(2+) contacts are provided by C98 and C101. E111 contributes to the substrate binding site. Zn(2+) is bound by residues C116 and C119. Y124 is a binding site for substrate. Residues 125-248 (PQIAPCVIVA…TVARRLIEDT (124 aa)) enclose the Nudix hydrolase domain. Residues A158, E174, and E178 each contribute to the a divalent metal cation site. A Nudix box motif is present at residues 159–180 (GFVEVGETLEQAVSREVLEESN). 192–199 (QPWPFPHS) lines the substrate pocket. E219 is an a divalent metal cation binding site. A substrate-binding site is contributed by A241.

It belongs to the Nudix hydrolase family. NudC subfamily. In terms of assembly, homodimer. It depends on Mg(2+) as a cofactor. Mn(2+) is required as a cofactor. Zn(2+) serves as cofactor.

The enzyme catalyses a 5'-end NAD(+)-phospho-ribonucleoside in mRNA + H2O = a 5'-end phospho-adenosine-phospho-ribonucleoside in mRNA + beta-nicotinamide D-ribonucleotide + 2 H(+). It catalyses the reaction NAD(+) + H2O = beta-nicotinamide D-ribonucleotide + AMP + 2 H(+). It carries out the reaction NADH + H2O = reduced beta-nicotinamide D-ribonucleotide + AMP + 2 H(+). Its function is as follows. mRNA decapping enzyme that specifically removes the nicotinamide adenine dinucleotide (NAD) cap from a subset of mRNAs by hydrolyzing the diphosphate linkage to produce nicotinamide mononucleotide (NMN) and 5' monophosphate mRNA. The NAD-cap is present at the 5'-end of some mRNAs and stabilizes RNA against 5'-processing. Has preference for mRNAs with a 5'-end purine. Catalyzes the hydrolysis of a broad range of dinucleotide pyrophosphates. The polypeptide is NAD-capped RNA hydrolase NudC (Yersinia pestis bv. Antiqua (strain Antiqua)).